We begin with the raw amino-acid sequence, 399 residues long: Elongation factor Tu (399 aa).

Residues 10–204 form the tr-type G domain; that stretch reads KPHVNIGTIG…AVDASIPEPE (195 aa). A G1 region spans residues 19 to 26; sequence GHVDHGKT. 19-26 contacts GTP; it reads GHVDHGKT. Thr26 contributes to the Mg(2+) binding site. A G2 region spans residues 60-64; that stretch reads GITIN. The segment at 81–84 is G3; the sequence is DCPG. GTP is bound by residues 81–85 and 136–139; these read DCPGH and NKCD. A G4 region spans residues 136–139; it reads NKCD. A G5 region spans residues 174–176; sequence SGL.

It belongs to the TRAFAC class translation factor GTPase superfamily. Classic translation factor GTPase family. EF-Tu/EF-1A subfamily. In terms of assembly, monomer.

Its subcellular location is the cytoplasm. The catalysed reaction is GTP + H2O = GDP + phosphate + H(+). In terms of biological role, GTP hydrolase that promotes the GTP-dependent binding of aminoacyl-tRNA to the A-site of ribosomes during protein biosynthesis. The chain is Elongation factor Tu from Prochlorococcus marinus (strain NATL1A).